We begin with the raw amino-acid sequence, 230 residues long: Leucyl/phenylalanyl-tRNA--protein transferase (230 aa).

This sequence belongs to the L/F-transferase family.

The protein resides in the cytoplasm. The enzyme catalyses N-terminal L-lysyl-[protein] + L-leucyl-tRNA(Leu) = N-terminal L-leucyl-L-lysyl-[protein] + tRNA(Leu) + H(+). The catalysed reaction is N-terminal L-arginyl-[protein] + L-leucyl-tRNA(Leu) = N-terminal L-leucyl-L-arginyl-[protein] + tRNA(Leu) + H(+). It carries out the reaction L-phenylalanyl-tRNA(Phe) + an N-terminal L-alpha-aminoacyl-[protein] = an N-terminal L-phenylalanyl-L-alpha-aminoacyl-[protein] + tRNA(Phe). Functionally, functions in the N-end rule pathway of protein degradation where it conjugates Leu, Phe and, less efficiently, Met from aminoacyl-tRNAs to the N-termini of proteins containing an N-terminal arginine or lysine. The chain is Leucyl/phenylalanyl-tRNA--protein transferase from Erwinia tasmaniensis (strain DSM 17950 / CFBP 7177 / CIP 109463 / NCPPB 4357 / Et1/99).